The sequence spans 301 residues: General transcription and DNA repair factor IIH subunit TFB4 (301 aa).

The C4-type zinc-finger motif lies at 259-276; the sequence is CSVCLSIFCEHHKKCSTC.

Belongs to the TFB4 family. As to quaternary structure, component of the 7-subunit TFIIH core complex composed of XPB, XPD, TFB1/GTF2H1, GTF2H2/P44, TFB4/GTF2H3, TFB2/GTF2H4 and TFB5/GTF2H5, which is active in NER. The core complex associates with the 3-subunit CDK-activating kinase (CAK) module composed of CYCH1/cyclin H1, CDKD and MAT1/At4g30820 to form the 10-subunit holoenzyme (holo-TFIIH) active in transcription.

The protein resides in the nucleus. Component of the general transcription and DNA repair factor IIH (TFIIH) core complex, which is involved in general and transcription-coupled nucleotide excision repair (NER) of damaged DNA and, when complexed to CAK, in RNA transcription by RNA polymerase II. In NER, TFIIH acts by opening DNA around the lesion to allow the excision of the damaged oligonucleotide and its replacement by a new DNA fragment. In transcription, TFIIH has an essential role in transcription initiation. When the pre-initiation complex (PIC) has been established, TFIIH is required for promoter opening and promoter escape. Phosphorylation of the C-terminal tail (CTD) of the largest subunit of RNA polymerase II by the kinase module CAK controls the initiation of transcription. This Arabidopsis thaliana (Mouse-ear cress) protein is General transcription and DNA repair factor IIH subunit TFB4.